Consider the following 777-residue polypeptide: Subtilisin-like protease SBT3.3 (777 aa).

The signal sequence occupies residues 1 to 24 (MRSFRSSILLVLLSLITVLNATRA). Residues 25–111 (RSETESKVHI…VIPDGFHELA (87 aa)) constitute a propeptide, removed in mature form. Residues 32–109 (VHIVYLGEKK…VHVIPDGFHE (78 aa)) enclose the Inhibitor I9 domain. Residues 115-624 (TWEYLGLSSA…GGIVNPEKAA (510 aa)) enclose the Peptidase S8 domain. An N-linked (GlcNAc...) asparagine glycan is attached at N131. D145 (charge relay system) is an active-site residue. N204 carries an N-linked (GlcNAc...) asparagine glycan. H220 (charge relay system) is an active-site residue. N-linked (GlcNAc...) asparagine glycans are attached at residues N235, N397, N412, N508, and N540. In terms of domain architecture, PA spans 403–481 (VCESLNLNPN…ELGTDILSYI (79 aa)). Residue S555 is the Charge relay system of the active site. N647 is a glycosylation site (N-linked (GlcNAc...) asparagine).

This sequence belongs to the peptidase S8 family.

Its subcellular location is the secreted. It is found in the extracellular space. It localises to the extracellular matrix. Functionally, serine protease that plays a role in the control of the establishment of immune priming and systemic induced resistance. The sequence is that of Subtilisin-like protease SBT3.3 from Arabidopsis thaliana (Mouse-ear cress).